Here is a 61-residue protein sequence, read N- to C-terminus: MATVAKINQANRKAKYPTRQYNRCKVCGRPRGYLRKFKMCRVCFRKLASEGQIPGVTKSSW.

Residues C24, C27, C40, and C43 each contribute to the Zn(2+) site.

Belongs to the universal ribosomal protein uS14 family. Zinc-binding uS14 subfamily. In terms of assembly, part of the 30S ribosomal subunit. Contacts proteins S3 and S10. It depends on Zn(2+) as a cofactor.

Binds 16S rRNA, required for the assembly of 30S particles and may also be responsible for determining the conformation of the 16S rRNA at the A site. The chain is Small ribosomal subunit protein uS14 from Treponema denticola (strain ATCC 35405 / DSM 14222 / CIP 103919 / JCM 8153 / KCTC 15104).